Consider the following 303-residue polypeptide: UDP-3-O-acyl-N-acetylglucosamine deacetylase (303 aa).

Zn(2+)-binding residues include His78, His237, and Asp241. Residue His264 is the Proton donor of the active site.

Belongs to the LpxC family. Zn(2+) is required as a cofactor.

The enzyme catalyses a UDP-3-O-[(3R)-3-hydroxyacyl]-N-acetyl-alpha-D-glucosamine + H2O = a UDP-3-O-[(3R)-3-hydroxyacyl]-alpha-D-glucosamine + acetate. The protein operates within glycolipid biosynthesis; lipid IV(A) biosynthesis; lipid IV(A) from (3R)-3-hydroxytetradecanoyl-[acyl-carrier-protein] and UDP-N-acetyl-alpha-D-glucosamine: step 2/6. Catalyzes the hydrolysis of UDP-3-O-myristoyl-N-acetylglucosamine to form UDP-3-O-myristoylglucosamine and acetate, the committed step in lipid A biosynthesis. The polypeptide is UDP-3-O-acyl-N-acetylglucosamine deacetylase (Xanthomonas euvesicatoria pv. vesicatoria (strain 85-10) (Xanthomonas campestris pv. vesicatoria)).